Reading from the N-terminus, the 120-residue chain is Ribosome-binding factor A (120 aa).

Belongs to the RbfA family. Monomer. Binds 30S ribosomal subunits, but not 50S ribosomal subunits or 70S ribosomes.

The protein resides in the cytoplasm. In terms of biological role, one of several proteins that assist in the late maturation steps of the functional core of the 30S ribosomal subunit. Associates with free 30S ribosomal subunits (but not with 30S subunits that are part of 70S ribosomes or polysomes). Required for efficient processing of 16S rRNA. May interact with the 5'-terminal helix region of 16S rRNA. This is Ribosome-binding factor A from Rickettsia rickettsii (strain Iowa).